The following is a 185-amino-acid chain: Ribosome-recycling factor (185 aa).

Belongs to the RRF family.

It localises to the cytoplasm. Responsible for the release of ribosomes from messenger RNA at the termination of protein biosynthesis. May increase the efficiency of translation by recycling ribosomes from one round of translation to another. This Syntrophus aciditrophicus (strain SB) protein is Ribosome-recycling factor.